The chain runs to 132 residues: UPF0357 protein YCL012C (132 aa).

Positions 1–25 are cleaved as a signal peptide; that stretch reads MWDLFYFKVFFWVVLISLCIFMVHR.

Belongs to the UPF0357 family.

The protein is UPF0357 protein YCL012C (YCL012C) of Saccharomyces bayanus (Yeast).